The following is a 423-amino-acid chain: UDP-N-acetylglucosamine 1-carboxyvinyltransferase 1 (423 aa).

23 to 24 (KN) is a binding site for phosphoenolpyruvate. Position 96 (R96) interacts with UDP-N-acetyl-alpha-D-glucosamine. Catalysis depends on C120, which acts as the Proton donor. C120 bears the 2-(S-cysteinyl)pyruvic acid O-phosphothioketal mark. UDP-N-acetyl-alpha-D-glucosamine is bound by residues 125–129 (RPIDL), D309, and V331.

The protein belongs to the EPSP synthase family. MurA subfamily.

It is found in the cytoplasm. It carries out the reaction phosphoenolpyruvate + UDP-N-acetyl-alpha-D-glucosamine = UDP-N-acetyl-3-O-(1-carboxyvinyl)-alpha-D-glucosamine + phosphate. Its pathway is cell wall biogenesis; peptidoglycan biosynthesis. Its function is as follows. Cell wall formation. Adds enolpyruvyl to UDP-N-acetylglucosamine. The sequence is that of UDP-N-acetylglucosamine 1-carboxyvinyltransferase 1 from Streptococcus mutans serotype c (strain ATCC 700610 / UA159).